The sequence spans 91 residues: Uteroglobin (91 aa).

An N-terminal signal peptide occupies residues 1 to 21 (MKLAVTLTLVTLALCCSSASA).

This sequence belongs to the secretoglobin family. In terms of assembly, antiparallel homodimer; disulfide-linked. Interaction with LMBR1L has been observed in PubMed:16423471, but not in PubMed:23964685. As to expression, club cells (nonciliated cells of the surface epithelium of the pulmonary airways).

The protein localises to the secreted. Binds phosphatidylcholine, phosphatidylinositol, polychlorinated biphenyls (PCB) and weakly progesterone, potent inhibitor of phospholipase A2. The polypeptide is Uteroglobin (SCGB1A1) (Homo sapiens (Human)).